We begin with the raw amino-acid sequence, 249 residues long: Aspartate/glutamate leucyltransferase (249 aa).

The protein belongs to the R-transferase family. Bpt subfamily.

The protein resides in the cytoplasm. The catalysed reaction is N-terminal L-glutamyl-[protein] + L-leucyl-tRNA(Leu) = N-terminal L-leucyl-L-glutamyl-[protein] + tRNA(Leu) + H(+). The enzyme catalyses N-terminal L-aspartyl-[protein] + L-leucyl-tRNA(Leu) = N-terminal L-leucyl-L-aspartyl-[protein] + tRNA(Leu) + H(+). Functions in the N-end rule pathway of protein degradation where it conjugates Leu from its aminoacyl-tRNA to the N-termini of proteins containing an N-terminal aspartate or glutamate. The polypeptide is Aspartate/glutamate leucyltransferase (Azorhizobium caulinodans (strain ATCC 43989 / DSM 5975 / JCM 20966 / LMG 6465 / NBRC 14845 / NCIMB 13405 / ORS 571)).